We begin with the raw amino-acid sequence, 1511 residues long: Pleiotropic ABC efflux transporter of multiple drugs (1511 aa).

The span at 1–14 shows a compositional bias: polar residues; the sequence is MPEAKLNNNVNDVT. A disordered region spans residues 1–32; the sequence is MPEAKLNNNVNDVTSYSSASSSTENAADLHNY. Topologically, residues 1–517 are cytoplasmic; that stretch reads MPEAKLNNNV…LLIRNMWRLR (517 aa). Ser-22 bears the Phosphoserine mark. Phosphothreonine is present on residues Thr-49 and Thr-51. The tract at residues 52-71 is disordered; that stretch reads AQSMQNSTQSAPNKSDAQSI. 3 positions are modified to phosphoserine: Ser-54, Ser-58, and Ser-61. One can recognise an ABC transporter 1 domain in the interval 161–410; that stretch reads LRKFQRSKET…FEDMGYVCPS (250 aa). The chain crosses the membrane as a helical span at residues 518–542; that stretch reads NNIGFTLFMILGNCSMALILGSMFF. Topologically, residues 543–558 are extracellular; it reads KIMKKGDTSTFYFRGS. The helical transmembrane segment at 559–579 threads the bilayer; the sequence is AMFFAILFNAFSSLLEIFSLY. At 580 to 611 the chain is on the cytoplasmic side; the sequence is EARPITEKHRTYSLYHPSADAFASVLSEIPSK. The chain crosses the membrane as a helical span at residues 612-628; sequence LIIAVCFNIIFYFLVDF. Topologically, residues 629-631 are extracellular; the sequence is RRN. The helical transmembrane segment at 632–650 threads the bilayer; that stretch reads GGVFFFYLLINIVAVFSMS. The Cytoplasmic portion of the chain corresponds to 651–665; that stretch reads HLFRCVGSLTKTLSE. A helical membrane pass occupies residues 666 to 685; that stretch reads AMVPASMLLLALSMYTGFAI. Over 686–774 the chain is Extracellular; the sequence is PKKKILRWSK…QYYHKDKWRG (89 aa). The N-linked (GlcNAc...) asparagine glycan is linked to Asn-734. The helical transmembrane segment at 775–793 threads the bilayer; that stretch reads FGIGMAYVVFFFFVYLFLC. Over 794–1237 the chain is Cytoplasmic; the sequence is EYNEGAKQKG…GTSLQGLQNQ (444 aa). Positions 824–858 are disordered; it reads EKNANDPENVGERSDLSSDRKMLQESSEEESDTYG. Lys-825 participates in a covalent cross-link: Glycyl lysine isopeptide (Lys-Gly) (interchain with G-Cter in ubiquitin). A compositionally biased stretch (basic and acidic residues) spans 833 to 846; it reads VGERSDLSSDRKML. Phosphoserine occurs at positions 837, 840, 841, 849, 850, and 854. Positions 869–1112 constitute an ABC transporter 2 domain; that stretch reads FHWRNLCYEV…MIDYFESHGA (244 aa). 905–912 is an ATP binding site; the sequence is GASGAGKT. Residues 1238–1260 form a helical membrane-spanning segment; sequence MLAVFMFTVIFNPILQQYLPSFV. At 1261–1291 the chain is on the extracellular side; the sequence is QQRDLYEARERPSRTFSWISFIFAQIFVEVP. A helical transmembrane segment spans residues 1292–1313; that stretch reads WNILAGTIAYFIYYYPIGFYSN. The Cytoplasmic segment spans residues 1314–1324; it reads ASAAGQLHERG. Residues 1325-1349 traverse the membrane as a helical segment; that stretch reads ALFWLFSCAFYVYVGSMGLLVISFN. The Extracellular portion of the chain corresponds to 1350–1354; the sequence is QVAES. Residues 1355–1379 form a helical membrane-spanning segment; the sequence is AANLASLLFTMSLSFCGVMTTPSAM. The Cytoplasmic portion of the chain corresponds to 1380 to 1388; the sequence is PRFWIFMYR. A helical transmembrane segment spans residues 1389-1407; that stretch reads VSPLTYFIQALLAVGVANV. At 1408 to 1476 the chain is on the extracellular side; the sequence is DVKCADYELL…VNSFYSERWR (69 aa). Residue Asn-1447 is glycosylated (N-linked (GlcNAc...) asparagine). The helical transmembrane segment at 1477-1499 threads the bilayer; that stretch reads NYGIFICYIAFNYIAGVFFYWLA. Topologically, residues 1500–1511 are cytoplasmic; sequence RVPKKNGKLSKK.

It belongs to the ABC transporter superfamily. ABCG family. PDR (TC 3.A.1.205) subfamily. In terms of processing, ubiquitinylation mediates endocytosis and vacuolar degradation. Phosphorylation by casein kinase I stabilizes the protein half-life.

Its subcellular location is the cell membrane. Its activity is regulated as follows. FK506, isonitrile, enniatin, RU49953, kitasatospora E420, staurosporine CGP42700, prenyl-flavonoids, D-octapeptides were found to be inhibitors in vivo. Vanadate and oligomycin were found to be inhibitors in vitro. Active efflux of weakly charged organic compounds of 90 cubic Angstroms to 300 cubic Angstroms surface volume. Confers resistance to numerous chemicals including cycloheximide, sulfomethuron methyl, steroids, antiseptics, antibiotics, anticancer, herbicides, mycotoxins, insecticides, ionophores, alkaloids, flavonoids, phenothiazines, organotin compounds, carbazoles, lysosomotropic aminoesters, detergents, rhodamines and other fluorophores, azoles and other antifungals. Exhibits nucleoside triphosphatase activity. This is Pleiotropic ABC efflux transporter of multiple drugs (PDR5) from Saccharomyces cerevisiae (strain ATCC 204508 / S288c) (Baker's yeast).